The primary structure comprises 496 residues: Probable cytosol aminopeptidase (496 aa).

Lysine 264 and aspartate 269 together coordinate Mn(2+). The active site involves lysine 276. Mn(2+) contacts are provided by aspartate 287, aspartate 346, and glutamate 348. Residue arginine 350 is part of the active site.

The protein belongs to the peptidase M17 family. Mn(2+) is required as a cofactor.

It is found in the cytoplasm. It catalyses the reaction Release of an N-terminal amino acid, Xaa-|-Yaa-, in which Xaa is preferably Leu, but may be other amino acids including Pro although not Arg or Lys, and Yaa may be Pro. Amino acid amides and methyl esters are also readily hydrolyzed, but rates on arylamides are exceedingly low.. It carries out the reaction Release of an N-terminal amino acid, preferentially leucine, but not glutamic or aspartic acids.. Functionally, presumably involved in the processing and regular turnover of intracellular proteins. Catalyzes the removal of unsubstituted N-terminal amino acids from various peptides. This chain is Probable cytosol aminopeptidase, found in Geobacter sulfurreducens (strain ATCC 51573 / DSM 12127 / PCA).